Reading from the N-terminus, the 650-residue chain is MTPILTVLICLGLSLGPRTHVQAGHLPKPTLWAEPGSVITQGSPVTLRCQGGQETQEYRLYREKKTALWITRIPQELVKKGQFPIPSITWEHAGRYRCYYGSDTAGRSESSDPLELVVTGAYIKPTLSAQPSPVVNSGGNVILQCDSQVAFDGFSLCKEGEDEHPQCLNSQPHARGSSRAIFSVGPVSPSRRWWYRCYAYDSNSPYEWSLPSDLLELLVLGVSKKPSLSVQPGPIVAPEETLTLQCGSDAGYNRFVLYKDGERDFLQLAGAQPQAGLSQANFTLGPVSRSYGGQYRCYGAHNLSSEWSAPSDPLDILIAGQFYDRVSLSVQPGPTVASGENVTLLCQSQGWMQTFLLTKEGAADDPWRLRSTYQSQKYQAEFPMGPVTSAHAGTYRCYGSQSSKPYLLTHPSDPLELVVSGPSGGPSSPTTGPTSTSGPEDQPLTPTGSDPQSGLGRHLGVVIGILVAVILLLLLLLLLFLILRHRRQGKHWTSTQRKADFQHPAGAVGPEPTDRGLQWRSSPAADAQEENLYAAVKHTQPEDGVEMDTRSPHDEDPQAVTYAEVKHSRPRREMASPPSPLSGEFLDTKDRQAEEDRQMDTEAAASEAPQDVTYAQLHSLTLRREATEPPPSQEGPSPAVPSIYATLAIH.

The N-terminal stretch at Met1 to Ala23 is a signal peptide. Residues Gly24–Val461 lie on the Extracellular side of the membrane. Ig-like C2-type domains lie at Pro27–Glu115, Leu116–Gly221, Val222–Asp312, and Pro313–Thr409. 4 cysteine pairs are disulfide-bonded: Cys49–Cys98, Cys145–Cys197, Cys157–Cys167, and Cys246–Cys297. N-linked (GlcNAc...) asparagine glycosylation is found at Asn281, Asn302, and Asn341. The cysteines at positions 346 and 397 are disulfide-linked. A disordered region spans residues Leu415–Pro451. The span at Gly425–Pro439 shows a compositional bias: low complexity. The helical transmembrane segment at Val462–Ile482 threads the bilayer. Over Leu483–His650 the chain is Cytoplasmic. The interval His491–Ala524 is disordered. Short sequence motifs (ITIM motif) lie at residues Asn531–Val536 and Val560–Val565. Tyr533 carries the post-translational modification Phosphotyrosine. Residues Ala563 to His650 are disordered. Composition is skewed to basic and acidic residues over residues Glu564–Met574 and Leu586–Asp600. 2 consecutive short sequence motifs (ITIM motif) follow at residues Val612–Leu617 and Ser642–Leu647. Phosphotyrosine is present on residues Tyr614 and Tyr644.

As to quaternary structure, binds PTPN6 when phosphorylated. Binds FCER1A and FCGR1A. Interacts with human cytomegalovirus/HHV-5 protein UL18. Interacts with peptide-bound HLA-G-B2M complex. Interacts with peptide-bound HLA-F-B2M complex but not with peptide-free HLA-F open conformer. It does not probe the peptide sequence directly. Phosphorylated on tyrosine residues. Dephosphorylated by PTPN6. As to expression, expressed in B cells, monocytes and various dendritic cell (DC) subsets including myeloid, plasmacytoid and tolerogenic DCs (at protein level). Expressed in decidual macrophages (at protein level). Expressed in decidual NK cells (at protein level).

The protein resides in the cell membrane. It localises to the secreted. Functionally, receptor for class I MHC antigens. Recognizes a broad spectrum of HLA-A, HLA-B, HLA-C, HLA-G and HLA-F alleles. Receptor for H301/UL18, a human cytomegalovirus class I MHC homolog. Ligand binding results in inhibitory signals and down-regulation of the immune response. Engagement of LILRB1 present on natural killer cells or T-cells by class I MHC molecules protects the target cells from lysis. Interaction with HLA-B or HLA-E leads to inhibition of FCER1A signaling and serotonin release. Inhibits FCGR1A-mediated phosphorylation of cellular proteins and mobilization of intracellular calcium ions. Recognizes HLA-G in complex with B2M/beta-2 microglobulin and a nonamer self-peptide. Upon interaction with peptide-bound HLA-G-B2M complex, triggers secretion of growth-promoting factors by decidual NK cells. Reprograms B cells toward an immune suppressive phenotype. The chain is Leukocyte immunoglobulin-like receptor subfamily B member 1 from Homo sapiens (Human).